The primary structure comprises 498 residues: Putative antiporter subunit mnhD2 (498 aa).

14 consecutive transmembrane segments (helical) span residues 2 to 22 (LSNL…ILVF), 32 to 52 (YLYL…LIYV), 78 to 98 (LSLI…AYGF), 108 to 128 (YHLP…FLTS), 130 to 150 (LFNL…LITL), 161 to 181 (IIYV…IGLL), 209 to 229 (ISLI…FMWL), 240 to 260 (LAAL…IRFF), 271 to 291 (IHPL…IGVI), 308 to 328 (IGFI…GAIF), 330 to 350 (LVND…LVYI), 368 to 388 (FFGV…PFSG), 403 to 423 (GNYI…YSLF), and 450 to 470 (GILS…PVLL).

Belongs to the CPA3 antiporters (TC 2.A.63) subunit D family. May form a heterooligomeric complex that consists of seven subunits: mnhA2, mnhB2, mnhC2, mnhD2, mnhE2, mnhF2 and mnhG2.

Its subcellular location is the cell membrane. The protein is Putative antiporter subunit mnhD2 (mnhD2) of Staphylococcus aureus (strain MRSA252).